Reading from the N-terminus, the 213-residue chain is Orotate phosphoribosyltransferase (213 aa).

K26 contacts 5-phospho-alpha-D-ribose 1-diphosphate. 34-35 (FF) provides a ligand contact to orotate. 5-phospho-alpha-D-ribose 1-diphosphate-binding positions include 72–73 (YK), R99, K100, K103, H105, and 124–132 (DDVITAGTA). Orotate contacts are provided by T128 and R156.

It belongs to the purine/pyrimidine phosphoribosyltransferase family. PyrE subfamily. Homodimer. Mg(2+) is required as a cofactor.

The enzyme catalyses orotidine 5'-phosphate + diphosphate = orotate + 5-phospho-alpha-D-ribose 1-diphosphate. Its pathway is pyrimidine metabolism; UMP biosynthesis via de novo pathway; UMP from orotate: step 1/2. Its function is as follows. Catalyzes the transfer of a ribosyl phosphate group from 5-phosphoribose 1-diphosphate to orotate, leading to the formation of orotidine monophosphate (OMP). This Salmonella choleraesuis (strain SC-B67) protein is Orotate phosphoribosyltransferase.